Here is a 250-residue protein sequence, read N- to C-terminus: Gamma-secretase subunit APH1-like (250 aa).

A run of 7 helical transmembrane segments spans residues 5–25 (AGIG…VSVI), 29–49 (PFLI…LIIL), 57–77 (LPLK…SVCF), 116–136 (IALA…CLSL), 157–177 (FLIS…SMVI), 191–211 (IIVP…FASE), and 212–232 (GCVI…VHCG).

This sequence belongs to the APH-1 family. As to quaternary structure, probable component of the gamma-secretase complex, a complex composed of a presenilin homodimer, nicastrin, APH1 and PEN2.

It is found in the membrane. Its function is as follows. Probable subunit of the gamma-secretase complex, an endoprotease complex that catalyzes the intramembrane cleavage of integral proteins such as Notch receptors. This is Gamma-secretase subunit APH1-like from Arabidopsis thaliana (Mouse-ear cress).